The sequence spans 325 residues: Myo-inositol dehydrogenase Hyg17 (325 aa).

The protein belongs to the Gfo/Idh/MocA family.

The enzyme catalyses myo-inositol + NAD(+) = myo-inosose-5 + NADH + H(+). Its pathway is antibiotic biosynthesis. Its function is as follows. Dehydrogenase involved in the biosynthesis of the aminocyclitol moiety of hygromycin A, a broad-spectrum antibiotic. Catalyzes the NAD(+)-dependent oxidation of myo-inositol to myo-inosose-5 (neo-inosose). Shows reduced activity with scyllo-inositol, minimal activity with L-chiro-inositol and no activity with D-glucose, D-chiro-inositol, epi-inositol, muco-inositol and allo-inositol. Is specific for NAD(+) and cannot use NADP(+). The polypeptide is Myo-inositol dehydrogenase Hyg17 (Streptomyces leeuwenhoekii).